The primary structure comprises 440 residues: KH domain-containing protein 3 (440 aa).

Residues 1-39 form an involved in RNA binding region; the sequence is MASLKRFQTLVPLDHKQGTLFEIIGEPKLPKWFHVECLE. The 79-residue stretch at 40–118 folds into the KH; atypical domain; the sequence is DPKRLYVEPR…CRMKLMEIEA (79 aa). Residues 132 to 201 are disordered; the sequence is KAATQPAPVK…EVREAATEQA (70 aa). Phosphoserine; by ATR is present on Ser151. Thr274 and Thr286 each carry phosphothreonine. A required for interaction with NUMA1 and regulation of apoptosis in response to DNA damage region spans residues 341–440; it reads VREAATQLSP…RDAWESFIIL (100 aa). Phosphoserine is present on Ser349.

This sequence belongs to the KHDC1 family. In terms of assembly, component of the subcortical maternal complex (SCMC), at least composed of NLRP5, KHDC3, OOEP, and TLE6. Within the complex, interacts with NLRP5, OOEP and TLE6. The SCMC may facilitate translocation of its components between the nuclear and cytoplasmic compartments. Forms a scaffold complex with OOEP/FLOPED, and interacts with BLM and TRIM25 at DNA replication forks. Interacts with PARP1; the interaction is increased following the formation of DNA double-strand breaks. Interacts (via C-terminus) with NUMA1. In terms of processing, phosphorylation at Ser-151 is required to promote stalled fork restart. In terms of tissue distribution, detected in ovary, but not in testis or somatic tissues. In the ovary, expressed in growing oocytes.

The protein resides in the cytoplasm. It is found in the cell cortex. It localises to the nucleus. The protein localises to the mitochondrion. Its subcellular location is the cytoskeleton. The protein resides in the microtubule organizing center. It is found in the centrosome. It localises to the chromosome. Component of the subcortical maternal complex (SCMC), a multiprotein complex that plays a key role in early embryonic development. The SCMC complex is a structural constituent of cytoplasmic lattices, which consist in fibrous structures found in the cytoplasm of oocytes and preimplantation embryos. They are required to store maternal proteins critical for embryonic development, such as proteins that control epigenetic reprogramming of the preimplantation embryo, and prevent their degradation or activation. KHDC3 ensures proper spindle assembly by regulating the localization of AURKA via RHOA signaling and of PLK1 via a RHOA-independent process. Required for the localization of MAD2L1 to kinetochores to enable spindle assembly checkpoint function. As part of the OOEP-KHDC3 scaffold, recruits BLM and TRIM25 to DNA replication forks, thereby promoting the ubiquitination of BLM by TRIM25, enhancing BLM retainment at replication forks and therefore promoting stalled replication fork restart. Regulates homologous recombination-mediated DNA repair via recruitment of RAD51 to sites of DNA double-strand breaks, and sustainment of PARP1 activity, which in turn modulates downstream ATM or ATR activation. Activation of ATM or ATR in response to DNA double-strand breaks may be cell-type specific. Its role in DNA double-strand break repair is independent of its role in restarting stalled replication forks. Promotes neural stem cell neurogenesis and neuronal differentiation in the hippocampus. May regulate normal development of learning, memory and anxiety. Capable of binding RNA. The protein is KH domain-containing protein 3 of Mus musculus (Mouse).